A 103-amino-acid polypeptide reads, in one-letter code: Large ribosomal subunit protein bL21 (103 aa).

The protein belongs to the bacterial ribosomal protein bL21 family. Part of the 50S ribosomal subunit. Contacts protein L20.

Functionally, this protein binds to 23S rRNA in the presence of protein L20. This Clostridium perfringens (strain ATCC 13124 / DSM 756 / JCM 1290 / NCIMB 6125 / NCTC 8237 / Type A) protein is Large ribosomal subunit protein bL21.